A 445-amino-acid polypeptide reads, in one-letter code: Aminopeptidase S (445 aa).

The N-terminal stretch at 1-45 (MRPNRFSLRRSPTAVAAVALAAVLAAGAPAAQAAGAAAPTAAAAA) is a signal peptide. Ca(2+)-binding residues include Asp-48 and Ile-49. Residues His-130 and Asp-142 each coordinate Zn(2+). Glu-176 acts as the Proton acceptor in catalysis. Residues Glu-177, Asp-205, and His-292 each coordinate Zn(2+). Cys-290 and Cys-295 form a disulfide bridge. Ca(2+) contacts are provided by Asp-307 and Asp-311. Residues 325 to 445 (GEPPTGEGVF…GYIDSWKLTF (121 aa)) form the P/Homo B domain. Residues 330 to 445 (GEGVFSNTTD…GYIDSWKLTF (116 aa)) constitute a propeptide, removed in mature form.

It belongs to the peptidase M28 family. M28A subfamily. As to quaternary structure, monomer. Ca(2+) is required as a cofactor. Zn(2+) serves as cofactor. It depends on Mn(2+) as a cofactor. Requires Co(2+) as cofactor.

It is found in the secreted. The catalysed reaction is Release of an N-terminal amino acid with a preference for large hydrophobic amino-terminus residues.. Calcium activates the enzyme, inhibited by 1,10-phenanthroline, EDTA and EGTA. End-product inhibited by L-amino acids. Non-competitively inhibited by NaF and NaH(2)PO(4). In terms of biological role, an exopeptidase specific for larger hydrophobic amino acids (especially leucine), no cleavage occurs if the next residue is proline. The chain is Aminopeptidase S from Streptomyces griseus subsp. griseus (strain JCM 4626 / CBS 651.72 / NBRC 13350 / KCC S-0626 / ISP 5235).